Reading from the N-terminus, the 349-residue chain is Ureidoglycolate dehydrogenase (NAD(+)) (349 aa).

His-116 functions as the Proton acceptor in the catalytic mechanism. NAD(+) contacts are provided by residues Ser-140, 174–176 (DMA), Lys-224, and 306–308 (GQD).

The protein belongs to the LDH2/MDH2 oxidoreductase family. In terms of assembly, homodimer.

It is found in the cytoplasm. It catalyses the reaction (S)-ureidoglycolate + NAD(+) = N-carbamoyl-2-oxoglycine + NADH + H(+). It participates in nitrogen metabolism; (S)-allantoin degradation; oxalurate from (S)-ureidoglycolate: step 1/1. Functionally, allD plays a pivotal role as a metabolic branch-point enzyme in nitrogen utilization via the assimilation of allantoin. It is able to utilize allantoin as a sole source of nitrogen under anaerobic conditions. Catalyzes the oxidation of ureidoglycolate to oxalurate. The sequence is that of Ureidoglycolate dehydrogenase (NAD(+)) from Escherichia coli (strain K12).